The following is a 475-amino-acid chain: UDP-N-acetylmuramate--L-alanine ligase (475 aa).

Residue 112-118 coordinates ATP; that stretch reads GTHGKTT.

Belongs to the MurCDEF family.

It localises to the cytoplasm. It catalyses the reaction UDP-N-acetyl-alpha-D-muramate + L-alanine + ATP = UDP-N-acetyl-alpha-D-muramoyl-L-alanine + ADP + phosphate + H(+). It functions in the pathway cell wall biogenesis; peptidoglycan biosynthesis. Functionally, cell wall formation. In Cupriavidus pinatubonensis (strain JMP 134 / LMG 1197) (Cupriavidus necator (strain JMP 134)), this protein is UDP-N-acetylmuramate--L-alanine ligase.